Here is a 48-residue protein sequence, read N- to C-terminus: uncharacterized protein (48 aa).

The segment at 1–48 is disordered; the sequence is MSRRMGGGMPKINLSGAIPNNNTSTPSTPTLRSSVSVSSSNSRGLFLA. Residues 20-48 are compositionally biased toward low complexity; it reads NNNTSTPSTPTLRSSVSVSSSNSRGLFLA.

This is an uncharacterized protein from Dictyostelium discoideum (Social amoeba).